Here is a 156-residue protein sequence, read N- to C-terminus: Transcriptional repressor NrdR (156 aa).

A zinc finger spans residues 3–34 (CPKCNSTHSRVVDSRHADEVNAIRRRRECEEC). Positions 49 to 139 (LIVVKKDGTR…VYKEFKDVDQ (91 aa)) constitute an ATP-cone domain.

The protein belongs to the NrdR family. The cofactor is Zn(2+).

Negatively regulates transcription of bacterial ribonucleotide reductase nrd genes and operons by binding to NrdR-boxes. This chain is Transcriptional repressor NrdR, found in Staphylococcus saprophyticus subsp. saprophyticus (strain ATCC 15305 / DSM 20229 / NCIMB 8711 / NCTC 7292 / S-41).